Reading from the N-terminus, the 1183-residue chain is DNA-directed RNA polymerase subunit beta (1183 aa).

A compositionally biased stretch (acidic residues) spans 1153 to 1162; sequence DMQDNEEEDV. The interval 1153 to 1183 is disordered; it reads DMQDNEEEDVVERKVDLQQKDAPQSQKEVTD. Residues 1173–1183 are compositionally biased toward polar residues; it reads DAPQSQKEVTD.

The protein belongs to the RNA polymerase beta chain family. In terms of assembly, the RNAP catalytic core consists of 2 alpha, 1 beta, 1 beta' and 1 omega subunit. When a sigma factor is associated with the core the holoenzyme is formed, which can initiate transcription.

The enzyme catalyses RNA(n) + a ribonucleoside 5'-triphosphate = RNA(n+1) + diphosphate. Functionally, DNA-dependent RNA polymerase catalyzes the transcription of DNA into RNA using the four ribonucleoside triphosphates as substrates. The chain is DNA-directed RNA polymerase subunit beta from Staphylococcus saprophyticus subsp. saprophyticus (strain ATCC 15305 / DSM 20229 / NCIMB 8711 / NCTC 7292 / S-41).